An 894-amino-acid polypeptide reads, in one-letter code: DNA mismatch repair protein MutS (894 aa).

632–639 is a binding site for ATP; sequence GPNMGGKS.

This sequence belongs to the DNA mismatch repair MutS family.

Its function is as follows. This protein is involved in the repair of mismatches in DNA. It is possible that it carries out the mismatch recognition step. This protein has a weak ATPase activity. This Paraburkholderia phytofirmans (strain DSM 17436 / LMG 22146 / PsJN) (Burkholderia phytofirmans) protein is DNA mismatch repair protein MutS.